The following is a 59-amino-acid chain: Large ribosomal subunit protein uL30 (59 aa).

Belongs to the universal ribosomal protein uL30 family. In terms of assembly, part of the 50S ribosomal subunit.

This Haemophilus ducreyi (strain 35000HP / ATCC 700724) protein is Large ribosomal subunit protein uL30.